The sequence spans 280 residues: Acyl-[acyl-carrier-protein]--UDP-N-acetylglucosamine O-acyltransferase (280 aa).

The protein belongs to the transferase hexapeptide repeat family. LpxA subfamily. In terms of assembly, homotrimer.

It localises to the cytoplasm. It catalyses the reaction a (3R)-hydroxyacyl-[ACP] + UDP-N-acetyl-alpha-D-glucosamine = a UDP-3-O-[(3R)-3-hydroxyacyl]-N-acetyl-alpha-D-glucosamine + holo-[ACP]. It functions in the pathway glycolipid biosynthesis; lipid IV(A) biosynthesis; lipid IV(A) from (3R)-3-hydroxytetradecanoyl-[acyl-carrier-protein] and UDP-N-acetyl-alpha-D-glucosamine: step 1/6. In terms of biological role, involved in the biosynthesis of lipid A, a phosphorylated glycolipid that anchors the lipopolysaccharide to the outer membrane of the cell. The chain is Acyl-[acyl-carrier-protein]--UDP-N-acetylglucosamine O-acyltransferase from Chlamydia trachomatis serovar L2 (strain ATCC VR-902B / DSM 19102 / 434/Bu).